The sequence spans 305 residues: MNEYLVSRRRLLRLSLSLLPLGLGRPALAQSLFMPQRVITLFQGATDTAVALGITPAGVVDSWSEKPMYRYLRQALAGVPHVGLETQPSLEDIVLLKPDAIVASRFRHQRLEPLLSQIAPVVMLDEIYQFKKTVQVMGQALQRQAVADQLLQNWQLRVNGLREQLQRKFGGDWPPTVSILDIREDHIRSYLPGSFPGSVLSELGFGWSDASRAQPGVSLKLTNKESIPVVDADIFFIFLRSESPSVQRNYESLIRHPLWQQLRAPRRNQVWVVNGVTWSLSGGILGANMMLDDIARVTGIAGGVS.

The first 29 residues, 1–29 (MNEYLVSRRRLLRLSLSLLPLGLGRPALA), serve as a signal peptide directing secretion. Positions 37–302 (RVITLFQGAT…DIARVTGIAG (266 aa)) constitute a Fe/B12 periplasmic-binding domain.

This sequence belongs to the bacterial solute-binding protein 8 family.

The protein resides in the periplasm. Binds citrate- or chloride-dependent Fe(3+); part of the binding-protein-dependent transport system CbrABCD for uptake of the siderophore achromobactin. The sequence is that of Achromobactin-binding periplasmic protein (cbrA) from Dickeya dadantii (strain 3937) (Erwinia chrysanthemi (strain 3937)).